A 661-amino-acid chain; its full sequence is Peroxisomal acyl-coenzyme A oxidase 1 (661 aa).

Residues K89 and K90 each carry the N6-succinyllysine modification. T139 contributes to the FAD binding site. An N6-succinyllysine modification is found at K159. FAD is bound at residue G178. N6-acetyllysine is present on K216. Position 241 is an N6-succinyllysine (K241). K255, K267, and K272 each carry N6-acetyllysine. K349 is subject to N6-succinyllysine. Catalysis depends on E421, which acts as the Proton acceptor. Residues K437, K446, K512, and K637 each carry the N6-acetyllysine; alternate modification. An N6-succinyllysine; alternate mark is found at K437, K446, K512, and K637. N6-succinyllysine is present on K643. S649 carries the post-translational modification Phosphoserine. An N6-acetyllysine modification is found at K652. K655 is modified (N6-succinyllysine). The short motif at 659 to 661 is the Microbody targeting signal element; that stretch reads SKL.

It belongs to the acyl-CoA oxidase family. As to quaternary structure, homodimer. Interacts with LONP2. FAD serves as cofactor.

The protein localises to the peroxisome. It carries out the reaction a 2,3-saturated acyl-CoA + O2 = a (2E)-enoyl-CoA + H2O2. The catalysed reaction is hexadecanoyl-CoA + O2 = (2E)-hexadecenoyl-CoA + H2O2. It catalyses the reaction dodecanoyl-CoA + O2 = (2E)-dodecenoyl-CoA + H2O2. The enzyme catalyses octanoyl-CoA + O2 = (2E)-octenoyl-CoA + H2O2. It carries out the reaction decanoyl-CoA + O2 = (2E)-decenoyl-CoA + H2O2. The catalysed reaction is tetradecanoyl-CoA + O2 = (2E)-tetradecenoyl-CoA + H2O2. It catalyses the reaction hexadecanedioyl-CoA + O2 = (2E)-hexadecenedioyl-CoA + H2O2. The enzyme catalyses tetracosanoyl-CoA + O2 = (2E)-tetracosenoyl-CoA + H2O2. It carries out the reaction glutaryl-CoA + O2 = (2E)-glutaconyl-CoA + H2O2. The catalysed reaction is hexanoyl-CoA + O2 = (2E)-hexenoyl-CoA + H2O2. It catalyses the reaction octadecanoyl-CoA + O2 = (2E)-octadecenoyl-CoA + H2O2. The enzyme catalyses (5Z,8Z,11Z,14Z,17Z)-eicosapentaenoyl-CoA + O2 = (2E,5Z,8Z,11Z,14Z,17Z)-icosahexaenoyl-CoA + H2O2. It carries out the reaction (6Z,9Z,12Z,15Z,18Z,21Z)-tetracosahexaenoyl-CoA + O2 = (2E,6Z,9Z,12Z,15Z,18Z,21Z)-tetracosaheptaenoyl-CoA + H2O2. It participates in lipid metabolism; peroxisomal fatty acid beta-oxidation. Its function is as follows. Involved in the initial and rate-limiting step of peroxisomal beta-oxidation of straight-chain saturated and unsaturated very-long-chain fatty acids. Catalyzes the desaturation of fatty acyl-CoAs such as palmitoyl-CoA (hexadecanoyl-CoA) to 2-trans-enoyl-CoAs ((2E)-enoyl-CoAs) such as (2E)-hexadecenoyl-CoA, and donates electrons directly to molecular oxygen (O(2)), thereby producing hydrogen peroxide (H(2)O(2)). Isoform 2 shows higher activity with hexadecanoyl-CoA as substrate than isoform 1. The protein is Peroxisomal acyl-coenzyme A oxidase 1 (ACOX1) of Phascolarctos cinereus (Koala).